A 543-amino-acid polypeptide reads, in one-letter code: Zinc finger protein 34 (543 aa).

A KRAB domain is found at 14-87 (VTFEDVAVFL…DMHGAEQPSV (74 aa)). The tract at residues 84–151 (QPSVDGSAHG…PGEQRGPRLV (68 aa)) is disordered. Over residues 124-147 (EPGEVHERVREPEGRLDRPGEQRG) the composition is skewed to basic and acidic residues. C2H2-type zinc fingers lie at residues 179 to 201 (HKCD…KRVH), 234 to 256 (YYCG…QRLH), 262 to 284 (YKCE…RRMH), 290 to 312 (YRCD…QRIH), 318 to 340 (YKCS…QRIH), 346 to 368 (YKCS…RRTH), 374 to 396 (YECK…QRIH), 402 to 424 (YKCN…QRSH), 430 to 452 (YECN…QRIH), 458 to 480 (YKCS…QRSH), 486 to 508 (YKCA…RRIH), and 514 to 536 (YTCG…QRIH).

It belongs to the krueppel C2H2-type zinc-finger protein family.

The protein localises to the nucleus. Its function is as follows. May be involved in transcriptional regulation. This Bos taurus (Bovine) protein is Zinc finger protein 34 (ZNF34).